We begin with the raw amino-acid sequence, 43 residues long: Protein PsbN 1 (43 aa).

A helical membrane pass occupies residues 3–23; that stretch reads TATILGILIAAAVVGITVLAL.

This sequence belongs to the PsbN family.

It localises to the cellular thylakoid membrane. May play a role in photosystem I and II biogenesis. The protein is Protein PsbN 1 of Microcystis aeruginosa (strain NIES-843 / IAM M-2473).